Reading from the N-terminus, the 121-residue chain is uncharacterized protein (121 aa).

This is an uncharacterized protein from Archaeoglobus fulgidus (strain ATCC 49558 / DSM 4304 / JCM 9628 / NBRC 100126 / VC-16).